The primary structure comprises 449 residues: UDP-N-acetylmuramoylalanine--D-glutamate ligase (449 aa).

An ATP-binding site is contributed by 118–124; the sequence is GTNGKTT.

This sequence belongs to the MurCDEF family.

The protein resides in the cytoplasm. It carries out the reaction UDP-N-acetyl-alpha-D-muramoyl-L-alanine + D-glutamate + ATP = UDP-N-acetyl-alpha-D-muramoyl-L-alanyl-D-glutamate + ADP + phosphate + H(+). Its pathway is cell wall biogenesis; peptidoglycan biosynthesis. Its function is as follows. Cell wall formation. Catalyzes the addition of glutamate to the nucleotide precursor UDP-N-acetylmuramoyl-L-alanine (UMA). The polypeptide is UDP-N-acetylmuramoylalanine--D-glutamate ligase (Staphylococcus aureus (strain MW2)).